We begin with the raw amino-acid sequence, 115 residues long: Large ribosomal subunit protein bL19 (115 aa).

This sequence belongs to the bacterial ribosomal protein bL19 family.

Functionally, this protein is located at the 30S-50S ribosomal subunit interface and may play a role in the structure and function of the aminoacyl-tRNA binding site. The protein is Large ribosomal subunit protein bL19 of Erwinia tasmaniensis (strain DSM 17950 / CFBP 7177 / CIP 109463 / NCPPB 4357 / Et1/99).